Reading from the N-terminus, the 467-residue chain is Nuclear distribution protein nudF 1 (467 aa).

The 33-residue stretch at 9 to 41 folds into the LisH domain; the sequence is QAEELHKSIIAYLASVNLSESATTLRAELGDAV. Residues 60–87 adopt a coiled-coil conformation; it reads TSVVRLQKKIMDLESRCAALQSELDSAT. 8 WD repeats span residues 113-154, 156-196, 200-247, 250-289, 292-352, 354-393, 398-428, and 429-466; these read SHRS…RTVK, HTKA…KNIR, GHDH…CVKT, GHVD…TRST, GHEH…IKTL, GHDN…KCVR, THEH…NGTP, and AATT…RVFA. A compositionally biased stretch (low complexity) spans 417–437; the sequence is GANGDAGANGTPAATTTSNGA. The interval 417–441 is disordered; that stretch reads GANGDAGANGTPAATTTSNGARQDP.

Belongs to the WD repeat LIS1/nudF family. Self-associates. Interacts with nudE and dynein.

It is found in the cytoplasm. Its subcellular location is the cytoskeleton. The protein localises to the spindle pole. Functionally, positively regulates the activity of the minus-end directed microtubule motor protein dynein. May enhance dynein-mediated microtubule sliding by targeting dynein to the microtubule plus end. Required for nuclear migration during vegetative growth as well as development. Required for retrograde early endosome (EE) transport from the hyphal tip. Required for localization of dynein to the mitotic spindle poles. Recruits additional proteins to the dynein complex at SPBs. In Aspergillus clavatus (strain ATCC 1007 / CBS 513.65 / DSM 816 / NCTC 3887 / NRRL 1 / QM 1276 / 107), this protein is Nuclear distribution protein nudF 1.